Here is a 518-residue protein sequence, read N- to C-terminus: Arp2/3 complex-activating protein rickA (518 aa).

The segment at 310-518 (SAAQLQSAET…ERNAKQSQQR (209 aa)) is disordered. Pro residues-rich tracts occupy residues 344 to 354 (TPPPAPPPPMP) and 382 to 401 (VPPP…PPPV). The span at 418 to 430 (QPRPAVDTTNLMK) shows a compositional bias: polar residues. In terms of domain architecture, WH2 spans 424–441 (DTTNLMKQIQGGFNLKKI). Residues 439–461 (KKIEYGEDGKPIPKNKEDTKETS) are compositionally biased toward basic and acidic residues. Over residues 488 to 498 (GTDSGWASDVS) the composition is skewed to polar residues.

As to quaternary structure, homodimer.

It is found in the cell surface. Functionally, recruits and activates the Arp2/3 complex, which in turn leads to actin polymerization, promoting Rickettsia motility during infection. In Rickettsia bellii (strain RML369-C), this protein is Arp2/3 complex-activating protein rickA (rickA).